A 782-amino-acid chain; its full sequence is uncharacterized protein (782 aa).

3 disordered regions span residues methionine 1–lysine 127, asparagine 205–proline 234, and proline 308–arginine 355. Positions lysine 24–methionine 54 are enriched in basic and acidic residues. A compositionally biased stretch (low complexity) spans lysine 82–lysine 118. Residues alanine 312–methionine 324 are compositionally biased toward polar residues. Residues asparagine 326–arginine 336 are compositionally biased toward basic and acidic residues. A compositionally biased stretch (polar residues) spans serine 337–asparagine 346. Residues methionine 361–leucine 628 adopt a coiled-coil conformation. The segment covering glycine 629 to serine 668 has biased composition (basic and acidic residues). Positions glycine 629–glycine 689 are disordered. Residues arginine 669–arginine 678 are compositionally biased toward basic residues. Over residues arginine 679–glycine 689 the composition is skewed to basic and acidic residues.

This is an uncharacterized protein from Yarrowia lipolytica (strain CLIB 122 / E 150) (Yeast).